Reading from the N-terminus, the 250-residue chain is MRKTVIAGNWKMNLSEKEALSLAHSIKEKIPAISKGRISMIFPSTLHLAGVAKILQGTEILVGAQNVYPSGLAAFTGETSPEQLKELGVKVVMIGHSERRQFLGETNSFCNEKIHFLLKNDFIVLYCVGETLMERESGKTFEVISSQIREGLKGIHSHSFSNLILAYEPVWAIGTGKVATPAQAQEVHFFIRKEIAGLFLGAKEIAESISILYGGSVKPDNIQTLLKEKDLDGGLVGGASQKIDTYAGLF.

9 to 11 (NWK) lines the substrate pocket. Residue His96 is the Electrophile of the active site. Residue Glu168 is the Proton acceptor of the active site. Residues Gly174, Ser216, and 237 to 238 (GG) each bind substrate.

It belongs to the triosephosphate isomerase family. As to quaternary structure, homodimer.

Its subcellular location is the cytoplasm. The enzyme catalyses D-glyceraldehyde 3-phosphate = dihydroxyacetone phosphate. It participates in carbohydrate biosynthesis; gluconeogenesis. The protein operates within carbohydrate degradation; glycolysis; D-glyceraldehyde 3-phosphate from glycerone phosphate: step 1/1. Functionally, involved in the gluconeogenesis. Catalyzes stereospecifically the conversion of dihydroxyacetone phosphate (DHAP) to D-glyceraldehyde-3-phosphate (G3P). This chain is Triosephosphate isomerase, found in Leptospira borgpetersenii serovar Hardjo-bovis (strain JB197).